The sequence spans 313 residues: Pseudouridine kinase (313 aa).

Belongs to the carbohydrate kinase PfkB family.

The catalysed reaction is pseudouridine + ATP = psi-UMP + ADP + H(+). Functionally, catalyzes the phosphorylation of pseudouridine to pseudouridine 5'-phosphate (PsiMP). The chain is Pseudouridine kinase (psuK) from Escherichia coli (strain K12).